The sequence spans 355 residues: MSFFIASSPHAHSRKSTPDLMKWVALCALPGLLAQTYFFGWGTLVQLILAITIALSLEALVMLFRKRPPMRALRDHSALVTAWLLAVAIPPMAPWWIITIGLLFAIVIAKHLYGGLGQNPFNPAMIAYVVLLISFPVQMTSWSAPLPLIEAGHEVAKDPVTFGDLLSLIFTGLTIDGSSLQQVRAGIDGITTATPLDAFKTGLHSGATSSEILSQPIFEGFAGVGWQWVNLAYLAGGLILLKQRVIQWHIPVGFLGALLVMSSFFSLFFPGETASPLFHLLSGATMLGAFFIATDPVSASTTIKGRILFGAIIGTLVFIIRSWGGFPDGVAFAVLLANMCVPLIDYYTKPRTYGH.

Transmembrane regions (helical) follow at residues 23–43 (WVAL…GWGT), 44–64 (LVQL…VMLF), 78–109 (ALVT…IVIA), and 129–149 (VVLL…LPLI). T194 carries the FMN phosphoryl threonine modification. A run of 5 helical transmembrane segments spans residues 221–241 (FAGV…LILL), 250–270 (IPVG…LFFP), 273–293 (TASP…FFIA), 307–327 (ILFG…GGFP), and 328–348 (DGVA…DYYT).

This sequence belongs to the NqrB/RnfD family. The complex is composed of six subunits: RnfA, RnfB, RnfC, RnfD, RnfE and RnfG. The cofactor is FMN.

The protein resides in the cell inner membrane. In terms of biological role, part of a membrane-bound complex that couples electron transfer with translocation of ions across the membrane. This Vibrio vulnificus (strain CMCP6) protein is Ion-translocating oxidoreductase complex subunit D.